The sequence spans 177 residues: RNA pyrophosphohydrolase (177 aa).

One can recognise a Nudix hydrolase domain in the interval 6-149; the sequence is GYRPNVGIVI…KRDVYRRVMK (144 aa). The short motif at 38–59 is the Nudix box element; it reads GGINPGESAEQAMYRELFEEVG.

Belongs to the Nudix hydrolase family. RppH subfamily. A divalent metal cation serves as cofactor.

Accelerates the degradation of transcripts by removing pyrophosphate from the 5'-end of triphosphorylated RNA, leading to a more labile monophosphorylated state that can stimulate subsequent ribonuclease cleavage. This is RNA pyrophosphohydrolase from Cronobacter sakazakii (strain ATCC BAA-894) (Enterobacter sakazakii).